The primary structure comprises 436 residues: Anaerobic glycerol-3-phosphate dehydrogenase subunit B (436 aa).

The protein belongs to the anaerobic G-3-P dehydrogenase subunit B family. Composed of a catalytic GlpA/B dimer and of membrane bound GlpC. FMN serves as cofactor.

It carries out the reaction a quinone + sn-glycerol 3-phosphate = dihydroxyacetone phosphate + a quinol. Its pathway is polyol metabolism; glycerol degradation via glycerol kinase pathway; glycerone phosphate from sn-glycerol 3-phosphate (anaerobic route): step 1/1. Functionally, conversion of glycerol 3-phosphate to dihydroxyacetone. Uses fumarate or nitrate as electron acceptor. In Vibrio cholerae serotype O1 (strain M66-2), this protein is Anaerobic glycerol-3-phosphate dehydrogenase subunit B.